Reading from the N-terminus, the 127-residue chain is UPF0102 protein Paes_0016 (127 aa).

This sequence belongs to the UPF0102 family.

This is UPF0102 protein Paes_0016 from Prosthecochloris aestuarii (strain DSM 271 / SK 413).